The following is a 676-amino-acid chain: Pentatricopeptide repeat-containing protein ATP4 homolog, chloroplastic (676 aa).

A chloroplast-targeting transit peptide spans 1–73 (MASPSSLLSW…NSPRAAGLAR (73 aa)). The segment at 17 to 58 (LSFQPKNPSPSPATARVSVQDPPPPPSDANPSPGRSSNTSRY) is disordered. PPR repeat units follow at residues 148–182 (EVILYNVALKALRKRRRWSDAEALWEEMLREGVQP), 183–217 (DNATFSTVISCARACGMPGKAVEWFEKMPDFGCSP), 218–252 (DMLTYSAVIDAYGRAGDAETALRLYDRARAEKWQL), 253–287 (DPVICATVIRVHSSSGNFDGALNVFEEMKAAGVKP), 288–322 (NLVVYNTVLDAMGRAMRPWVVKTIHRELVSQEAVP), 323–353 (NKATYCCLLHAYTRARYGEDAMAVYRVMKDE), 358–388 (DVVLYNMLLSMCADIGYVEEAEEIFRDMKAS), 396–430 (DSWSYSSMVTLYSCTGNVAGAEGILNEMVEAGFKP), 431–465 (NIFILTSLIRCYGKAGRTDDVVRSFAMLEDLGITP), and 532–566 (RMPYCNCLMDLAVNLSQMEKACALLDVALRLGIYS). The region spanning 578 to 662 (LHLRGLSVGA…WFLTTSVAAR (85 aa)) is the Smr domain.

The protein belongs to the PPR family. P subfamily.

It is found in the plastid. Its subcellular location is the chloroplast. Involved in translation and accumulation of chloroplast ATP synthase subunits. In Oryza sativa subsp. japonica (Rice), this protein is Pentatricopeptide repeat-containing protein ATP4 homolog, chloroplastic.